The sequence spans 568 residues: Proline--tRNA ligase (568 aa).

Belongs to the class-II aminoacyl-tRNA synthetase family. ProS type 1 subfamily. In terms of assembly, homodimer.

Its subcellular location is the cytoplasm. The catalysed reaction is tRNA(Pro) + L-proline + ATP = L-prolyl-tRNA(Pro) + AMP + diphosphate. Catalyzes the attachment of proline to tRNA(Pro) in a two-step reaction: proline is first activated by ATP to form Pro-AMP and then transferred to the acceptor end of tRNA(Pro). As ProRS can inadvertently accommodate and process non-cognate amino acids such as alanine and cysteine, to avoid such errors it has two additional distinct editing activities against alanine. One activity is designated as 'pretransfer' editing and involves the tRNA(Pro)-independent hydrolysis of activated Ala-AMP. The other activity is designated 'posttransfer' editing and involves deacylation of mischarged Ala-tRNA(Pro). The misacylated Cys-tRNA(Pro) is not edited by ProRS. In Macrococcus caseolyticus (strain JCSC5402) (Macrococcoides caseolyticum), this protein is Proline--tRNA ligase.